Reading from the N-terminus, the 215-residue chain is Calmodulin-like protein 5 (215 aa).

Residues 38–61 (KNSPPSPSTMLPSPSSSSAPTKRI) are disordered. Positions 45–57 (STMLPSPSSSSAP) are enriched in low complexity. EF-hand domains are found at residues 61–96 (IDPSELKRVFQMFDKNGDGRITKEELNDSLENLGIY), 97–132 (IPDKDLTQMIHKIDANGDGCVDIDEFESLYSSIVDE), 139–174 (TEEEDMKDAFNVFDQDGDGFITVEELKSVMASLGLK), and 177–212 (KTLDGCKKMIMQVDADGDGRVNYKEFLQMMKGGGFS). Ca(2+)-binding residues include Asp74, Asn76, Asp78, Arg80, Glu85, Asp110, Asn112, Asp114, Cys116, Glu121, Asp152, Asp154, Asp156, Glu163, Asp190, Asp192, Asp194, Arg196, and Glu201.

It belongs to the calmodulin family.

In terms of biological role, potential calcium sensor. The polypeptide is Calmodulin-like protein 5 (CML5) (Arabidopsis thaliana (Mouse-ear cress)).